A 159-amino-acid chain; its full sequence is Ribosomal RNA large subunit methyltransferase H (159 aa).

Residues L76, G108, and L127 to F132 each bind S-adenosyl-L-methionine.

This sequence belongs to the RNA methyltransferase RlmH family. As to quaternary structure, homodimer.

It localises to the cytoplasm. The enzyme catalyses pseudouridine(1915) in 23S rRNA + S-adenosyl-L-methionine = N(3)-methylpseudouridine(1915) in 23S rRNA + S-adenosyl-L-homocysteine + H(+). Functionally, specifically methylates the pseudouridine at position 1915 (m3Psi1915) in 23S rRNA. In Ureaplasma urealyticum serovar 10 (strain ATCC 33699 / Western), this protein is Ribosomal RNA large subunit methyltransferase H.